The sequence spans 158 residues: Pyruvoyl-dependent arginine decarboxylase (158 aa).

Serine 44 carries the pyruvic acid (Ser) modification.

This sequence belongs to the PdaD family. Pyruvate serves as cofactor.

The catalysed reaction is L-arginine + H(+) = agmatine + CO2. The polypeptide is Pyruvoyl-dependent arginine decarboxylase (Thermococcus sibiricus (strain DSM 12597 / MM 739)).